Reading from the N-terminus, the 531-residue chain is MSGRGAGGFPLPPLSPGGGAVAAALGAPPPPAGPGMLPGPALRGPGPAGGVGGPGAAAFRPMGPAGPAAQYQRPGMSPGSRMPMAGLQVGPPAGSPFGTAAPLRPGMPPTMMDPFRKRLLVPQAQPPMPAQRRGLKRRKMADKVLPQRIRELVPESQAYMDLLAFERKLDQTIARKRMEIQEAIKKPLTQKRKLRIYISNTFSPSKAEGDTAGTTGTPGGTPAGDKVASWELRVEGKLLDDPSKQKRKFSSFFKSLVIELDKELYGPDNHLVEWHRMPTTQETDGFQVKRPGDLNVKCTLLLMLDHQPPQYKLDPRLARLLGVHTQTRAAIMQALWLYIKHNQLQDGHEREYINCNRYFRQIFSCGRLRFSEIPMKLAGLLQHPDPIVINHVISVDPNDQKKTACYDIDVEVDDPLKAQMSNFLASTTNQQEIASLDVKIHETIESINQLKTQRDFMLSFSTDPQDFIQEWLRSQRRDLKIITDVIGNPEEERRAAFYHQPWAQEAVGRHIFAKVQQRRQELEQVLGIRLT.

2 positions are modified to asymmetric dimethylarginine: arginine 81 and arginine 104. Serine 203 is modified (phosphoserine). A disordered region spans residues 205–227 (SKAEGDTAGTTGTPGGTPAGDKV). At threonine 217 the chain carries Phosphothreonine. Residue lysine 226 forms a Glycyl lysine isopeptide (Lys-Gly) (interchain with G-Cter in SUMO2) linkage. Positions 306–383 (HQPPQYKLDP…PMKLAGLLQH (78 aa)) constitute an SWIB/MDM2 domain.

This sequence belongs to the SMARCD family. In terms of assembly, component of the multiprotein chromatin-remodeling complexes SWI/SNF: SWI/SNF-A (BAF), SWI/SNF-B (PBAF) and related complexes. The canonical complex contains a catalytic subunit (either SMARCA4/BRG1/BAF190A or SMARCA2/BRM/BAF190B), and at least SMARCE1, ACTL6A/BAF53, SMARCC1/BAF155, SMARCC2/BAF170, and SMARCB1/SNF5/BAF47. Other subunits specific to each of the complexes may also be present permitting several possible combinations developmentally and tissue specific. Component of the BAF complex, which includes at least actin (ACTB), ARID1A/BAF250A, ARID1B/BAF250B, SMARCA2/BRM, SMARCA4/BRG1, ACTL6A/BAF53, ACTL6B/BAF53B, SMARCE1/BAF57, SMARCC1/BAF155, SMARCC2/BAF170, SMARCB1/SNF5/INI1, and one or more SMARCD1/BAF60A, SMARCD2/BAF60B, or SMARCD3/BAF60C. In muscle cells, the BAF complex also contains DPF3. Component of the SWI/SNF-B (PBAF) chromatin remodeling complex, at least composed of SMARCA4/BRG1, SMARCB1/BAF47/SNF5, ACTL6A/BAF53A or ACTL6B/BAF53B, SMARCE1/BAF57, SMARCD1/BAF60A, SMARCD2/BAF60B, perhaps SMARCD3/BAF60C, SMARCC1/BAF155, SMARCC2/BAF170, PBRM1/BAF180, ARID2/BAF200 and actin (ACTB). Interacts with UNKL. Interacts with CEBPE. Ubiquitinated through a signaling process involving RAC1 and the RING finger protein UNKL.

Its subcellular location is the nucleus. Involved in transcriptional activation and repression of select genes by chromatin remodeling (alteration of DNA-nucleosome topology). Component of SWI/SNF chromatin remodeling complexes that carry out key enzymatic activities, changing chromatin structure by altering DNA-histone contacts within a nucleosome in an ATP-dependent manner. Critical regulator of myeloid differentiation, controlling granulocytopoiesis and the expression of genes involved in neutrophil granule formation. This Bos taurus (Bovine) protein is SWI/SNF-related matrix-associated actin-dependent regulator of chromatin subfamily D member 2 (SMARCD2).